Reading from the N-terminus, the 130-residue chain is MPMKPINPSQFPKPIAPYSAGAMADNVVYVSGTLALGEGGQVLHVGDAKAQTRHVLETIKTTLEAAGGGMADITFNHIFVKSWDDYKAINEVYAEYFPGDKPARYCIQCGLVKPELLVEIASIAHLSPKE.

This sequence belongs to the RutC family.

The enzyme catalyses (Z)-3-aminoacrylate + H2O + H(+) = 3-oxopropanoate + NH4(+). Involved in pyrimidine catabolism. Catalyzes the deamination of 3-aminoacrylate to malonic semialdehyde, a reaction that can also occur spontaneously. RutC may facilitate the reaction and modulate the metabolic fitness, rather than catalyzing essential functions. This is 3-aminoacrylate deaminase RutC from Haliangium ochraceum (strain DSM 14365 / JCM 11303 / SMP-2).